The sequence spans 301 residues: Probable alpha-L-glutamate ligase (301 aa).

The 184-residue stretch at 104–287 (LQLLARKGIG…VAGQLIDYIE (184 aa)) folds into the ATP-grasp domain. ATP contacts are provided by residues Lys141, 178 to 179 (EF), Asp187, and 211 to 213 (RSN). Residues Asp248, Glu260, and Asn262 each coordinate Mg(2+). Residues Asp248, Glu260, and Asn262 each contribute to the Mn(2+) site.

This sequence belongs to the RimK family. Requires Mg(2+) as cofactor. The cofactor is Mn(2+).

The protein is Probable alpha-L-glutamate ligase of Maridesulfovibrio salexigens (strain ATCC 14822 / DSM 2638 / NCIMB 8403 / VKM B-1763) (Desulfovibrio salexigens).